Consider the following 704-residue polypeptide: Elongation factor G (704 aa).

The 284-residue stretch at aspartate 8–leucine 291 folds into the tr-type G domain. Residues alanine 17–threonine 24, aspartate 90–histidine 94, and asparagine 144–aspartate 147 each bind GTP.

It belongs to the TRAFAC class translation factor GTPase superfamily. Classic translation factor GTPase family. EF-G/EF-2 subfamily.

The protein localises to the cytoplasm. Functionally, catalyzes the GTP-dependent ribosomal translocation step during translation elongation. During this step, the ribosome changes from the pre-translocational (PRE) to the post-translocational (POST) state as the newly formed A-site-bound peptidyl-tRNA and P-site-bound deacylated tRNA move to the P and E sites, respectively. Catalyzes the coordinated movement of the two tRNA molecules, the mRNA and conformational changes in the ribosome. The chain is Elongation factor G from Chlorobium luteolum (strain DSM 273 / BCRC 81028 / 2530) (Pelodictyon luteolum).